The following is a 241-amino-acid chain: tRNA pseudouridine synthase A (241 aa).

The Nucleophile role is filled by Asp52. Tyr111 contacts substrate.

Belongs to the tRNA pseudouridine synthase TruA family. Homodimer.

It carries out the reaction uridine(38/39/40) in tRNA = pseudouridine(38/39/40) in tRNA. Functionally, formation of pseudouridine at positions 38, 39 and 40 in the anticodon stem and loop of transfer RNAs. The polypeptide is tRNA pseudouridine synthase A (Ureaplasma urealyticum serovar 10 (strain ATCC 33699 / Western)).